We begin with the raw amino-acid sequence, 242 residues long: Probable septum site-determining protein MinC (242 aa).

This sequence belongs to the MinC family. Interacts with MinD and FtsZ.

In terms of biological role, cell division inhibitor that blocks the formation of polar Z ring septums. Rapidly oscillates between the poles of the cell to destabilize FtsZ filaments that have formed before they mature into polar Z rings. Prevents FtsZ polymerization. The protein is Probable septum site-determining protein MinC of Buchnera aphidicola subsp. Schizaphis graminum (strain Sg).